We begin with the raw amino-acid sequence, 310 residues long: Methionyl-tRNA formyltransferase (310 aa).

S111–P114 is a binding site for (6S)-5,6,7,8-tetrahydrofolate.

It belongs to the Fmt family.

The catalysed reaction is L-methionyl-tRNA(fMet) + (6R)-10-formyltetrahydrofolate = N-formyl-L-methionyl-tRNA(fMet) + (6S)-5,6,7,8-tetrahydrofolate + H(+). In terms of biological role, attaches a formyl group to the free amino group of methionyl-tRNA(fMet). The formyl group appears to play a dual role in the initiator identity of N-formylmethionyl-tRNA by promoting its recognition by IF2 and preventing the misappropriation of this tRNA by the elongation apparatus. The sequence is that of Methionyl-tRNA formyltransferase from Afipia carboxidovorans (strain ATCC 49405 / DSM 1227 / KCTC 32145 / OM5) (Oligotropha carboxidovorans).